A 40-amino-acid polypeptide reads, in one-letter code: Chitin-binding protein 4 (40 aa).

N-glycosylated.

Chitin-binding protein. Has antifungal activity against C.krusei, C.albicans, C.tropicalis and C.parapsilosis. Has antinociceptive and anti-inflammatory activity in mice. This Moringa oleifera (Horseradish tree) protein is Chitin-binding protein 4.